A 305-amino-acid chain; its full sequence is MTDPRRTEQVHPDYADLDTLAPDALIAALADDQLGAVRAVQAAAPQLTAALNAAVPQLERGGRLVYVGAGTSGRLGVLDATELTPTFSWPPERAVPLIAGGERAIRQAVEGAEDDEAAGERDVQAVNIGPDDVLIAVAASGTTPYVLGAARSGRAAGALTVGLANNPGAPLLAAVDCPVLLDTGPEIISGSTRLKAGTAQKIALNTLSSALMVRLGKLYGNLMVDVRATNAKLEDRARRLVQHATGADADAAQAALSECGGSVKTALVMLKLGLGAQEAAQRLEGAGGHARQVLGEGEALGTSAS.

In terms of domain architecture, SIS spans 54 to 217 (AVPQLERGGR…SSALMVRLGK (164 aa)). Glutamate 82 serves as the catalytic Proton donor. The active site involves glutamate 113.

The protein belongs to the GCKR-like family. MurNAc-6-P etherase subfamily. Homodimer.

The enzyme catalyses N-acetyl-D-muramate 6-phosphate + H2O = N-acetyl-D-glucosamine 6-phosphate + (R)-lactate. The protein operates within amino-sugar metabolism; N-acetylmuramate degradation. Its function is as follows. Specifically catalyzes the cleavage of the D-lactyl ether substituent of MurNAc 6-phosphate, producing GlcNAc 6-phosphate and D-lactate. The polypeptide is N-acetylmuramic acid 6-phosphate etherase (Deinococcus radiodurans (strain ATCC 13939 / DSM 20539 / JCM 16871 / CCUG 27074 / LMG 4051 / NBRC 15346 / NCIMB 9279 / VKM B-1422 / R1)).